Reading from the N-terminus, the 891-residue chain is Mating-type protein A-alpha Y1 (891 aa).

The homeobox DNA-binding region spans 146–205 (SKKPRPKFHSEYTPLLELYFRFNAYPTYADRRVLAEKTGMLTRQITVWFQNHRRRAKGPL). 5 disordered regions span residues 241 to 291 (PITL…PSTL), 319 to 339 (DIEM…LPKG), 393 to 437 (TRKP…RRVS), 610 to 718 (ARRK…EQSL), and 800 to 822 (MNWT…GGDE). Residues 244–257 (LGNNKTPDLTTSSR) show a composition bias toward polar residues. A compositionally biased stretch (basic residues) spans 328–337 (PKRRKMKKLP). Residues 427-437 (ASSTVPSRRVS) are compositionally biased toward low complexity. Positions 627–638 (KKDKKERKKAGL) are enriched in basic residues. Composition is skewed to low complexity over residues 651–667 (VSSR…TSAR) and 676–710 (QPSS…SMPS). Residues 800–818 (MNWTASVGSNAQDPASQES) are compositionally biased toward polar residues.

The protein localises to the nucleus. Functionally, specifies A-alpha-1 mating-type. May regulate the expression of genes specific to the homokaryotic cell type. This Schizophyllum commune (Split gill fungus) protein is Mating-type protein A-alpha Y1.